The chain runs to 211 residues: Imidazole glycerol phosphate synthase subunit HisH (211 aa).

Positions 4-211 (RVVILDYGSG…QLLANWVATL (208 aa)) constitute a Glutamine amidotransferase type-1 domain. The active-site Nucleophile is Cys-82. Catalysis depends on residues His-192 and Glu-194.

In terms of assembly, heterodimer of HisH and HisF.

Its subcellular location is the cytoplasm. The catalysed reaction is 5-[(5-phospho-1-deoxy-D-ribulos-1-ylimino)methylamino]-1-(5-phospho-beta-D-ribosyl)imidazole-4-carboxamide + L-glutamine = D-erythro-1-(imidazol-4-yl)glycerol 3-phosphate + 5-amino-1-(5-phospho-beta-D-ribosyl)imidazole-4-carboxamide + L-glutamate + H(+). The enzyme catalyses L-glutamine + H2O = L-glutamate + NH4(+). Its pathway is amino-acid biosynthesis; L-histidine biosynthesis; L-histidine from 5-phospho-alpha-D-ribose 1-diphosphate: step 5/9. IGPS catalyzes the conversion of PRFAR and glutamine to IGP, AICAR and glutamate. The HisH subunit catalyzes the hydrolysis of glutamine to glutamate and ammonia as part of the synthesis of IGP and AICAR. The resulting ammonia molecule is channeled to the active site of HisF. The protein is Imidazole glycerol phosphate synthase subunit HisH of Thermobifida fusca (strain YX).